Reading from the N-terminus, the 172-residue chain is Bifunctional protein PyrR (172 aa).

Positions 90 to 102 match the PRPP-binding motif; that stretch reads LVLVDDVLMSGRT.

This sequence belongs to the purine/pyrimidine phosphoribosyltransferase family. PyrR subfamily.

The enzyme catalyses UMP + diphosphate = 5-phospho-alpha-D-ribose 1-diphosphate + uracil. In terms of biological role, regulates the transcription of the pyrimidine nucleotide (pyr) operon in response to exogenous pyrimidines. Its function is as follows. Also displays a weak uracil phosphoribosyltransferase activity which is not physiologically significant. The polypeptide is Bifunctional protein PyrR (Pseudomonas entomophila (strain L48)).